A 129-amino-acid chain; its full sequence is Small ribosomal subunit protein uS9 (129 aa).

The interval S107–R129 is disordered. Positions K114–R129 are enriched in basic residues.

It belongs to the universal ribosomal protein uS9 family.

This is Small ribosomal subunit protein uS9 from Campylobacter jejuni subsp. jejuni serotype O:23/36 (strain 81-176).